Consider the following 865-residue polypeptide: Eukaryotic translation initiation factor 3 subunit C (865 aa).

Disordered regions lie at residues 1–92 (MSRF…AKDK) and 206–243 (EDEE…VGKG). Composition is skewed to acidic residues over residues 16-54 (SSDE…DSDA) and 69-80 (DDDSSDEEDSDA). Residues 82–92 (VTTKVKSAKDK) show a composition bias toward basic and acidic residues. Acidic residues predominate over residues 226–235 (ATAEDEEDDE). The 175-residue stretch at 606–780 (FHMHINLELL…QTVIFRKGVE (175 aa)) folds into the PCI domain. Residues 801–865 (SNERTLEQRT…GGALGAAVRA (65 aa)) form a disordered region. The span at 808–817 (QRTQGTSNAF) shows a compositional bias: polar residues. A compositionally biased stretch (gly residues) spans 822 to 841 (GRGGRGGGRGRGGGRGGPRF).

The protein belongs to the eIF-3 subunit C family. In terms of assembly, component of the eukaryotic translation initiation factor 3 (eIF-3) complex.

The protein resides in the cytoplasm. Functionally, component of the eukaryotic translation initiation factor 3 (eIF-3) complex, which is involved in protein synthesis of a specialized repertoire of mRNAs and, together with other initiation factors, stimulates binding of mRNA and methionyl-tRNAi to the 40S ribosome. The eIF-3 complex specifically targets and initiates translation of a subset of mRNAs involved in cell proliferation. In Pyricularia oryzae (strain 70-15 / ATCC MYA-4617 / FGSC 8958) (Rice blast fungus), this protein is Eukaryotic translation initiation factor 3 subunit C.